A 319-amino-acid polypeptide reads, in one-letter code: Annexin A4 (319 aa).

Position 2 is an N-acetylalanine (Ala-2). Thr-7 bears the Phosphothreonine mark. At Ser-12 the chain carries Phosphoserine. Annexin repeat units lie at residues 14–85 (FNAA…GMMT), 86–157 (PTVL…SLSA), 169–241 (ALMR…AIVK), and 245–316 (NKSA…ILCG). N6-acetyllysine occurs at positions 213, 293, and 300.

This sequence belongs to the annexin family. As to quaternary structure, monomer. Binds to SFTPA1 in a Ca(2+)-dependent manner.

Its subcellular location is the zymogen granule membrane. In terms of biological role, may play a role in alveolar type II cells through interaction with the surfactant protein SFTPA1 (SP-A). This chain is Annexin A4 (ANXA4), found in Bos taurus (Bovine).